A 173-amino-acid polypeptide reads, in one-letter code: Small ribosomal subunit protein uS5 (173 aa).

Positions 16-79 (LSELLVSVRR…NAAKKNMIRV (64 aa)) constitute an S5 DRBM domain.

Belongs to the universal ribosomal protein uS5 family. As to quaternary structure, part of the 30S ribosomal subunit. Contacts proteins S4 and S8.

Its function is as follows. With S4 and S12 plays an important role in translational accuracy. Functionally, located at the back of the 30S subunit body where it stabilizes the conformation of the head with respect to the body. This chain is Small ribosomal subunit protein uS5, found in Anaplasma phagocytophilum (strain HZ).